Consider the following 105-residue polypeptide: Platelet factor 4 (105 aa).

A signal peptide spans M1 to A29. T31 carries an O-linked (GalNAc...) threonine; partial glycan. Intrachain disulfides connect C44-C71 and C46-C87. S61 bears the Phosphoserine mark. Heparin is bound at residue K96 to L102.

This sequence belongs to the intercrine alpha (chemokine CxC) family. In terms of assembly, homotetramer. Interacts with TNFAIP6 (via Link domain). Interacts with CCR1. Interacts with CXCR3. Interacts with THBD; this interaction enhances generation of activated protein C. In terms of processing, O-linked glycan consists of Gal-GalNAc disaccharide which is modified with sialic acid residues (microheterogeneity).

It localises to the secreted. Chemokine released during platelet aggregation that plays a role in different biological processes including hematopoiesis, cell proliferation, differentiation, and activation. Acts via different functional receptors including CCR1, CXCR3A or CXCR3B. Upon interaction with CXCR3A receptor, induces activated T-lymphocytes migration mediated via downstream Ras/extracellular signal-regulated kinase (ERK) signaling. Neutralizes the anticoagulant effect of heparin by binding more strongly to heparin than to the chondroitin-4-sulfate chains of the carrier molecule. Plays a role in the inhibition of hematopoiesis and in the maintenance of hematopoietic stem cell (HSC) quiescence. Chemotactic for neutrophils and monocytes via CCR1. Inhibits endothelial cell proliferation. In cooperation with toll-like receptor 8/TLR8, induces chromatin remodeling and activates inflammatory gene expression via the TBK1-IRF5 axis. In addition, induces myofibroblast differentiation and collagen synthesis in different precursor cells, including endothelial cells, by stimulating endothelial-to-mesenchymal transition. Interacts with thrombomodulin/THBD to enhance the activation of protein C and thus potentiates its anticoagulant activity. In Rattus norvegicus (Rat), this protein is Platelet factor 4 (Pf4).